The chain runs to 369 residues: Methylthioribose-1-phosphate isomerase (369 aa).

Position 1 is an N-acetylmethionine (methionine 1). Arginine 158 is subject to Omega-N-methylarginine. Catalysis depends on aspartate 248, which acts as the Proton donor. Residue serine 366 is modified to Phosphoserine.

It belongs to the eIF-2B alpha/beta/delta subunits family. MtnA subfamily.

The protein resides in the cytoplasm. The protein localises to the nucleus. It catalyses the reaction 5-(methylsulfanyl)-alpha-D-ribose 1-phosphate = 5-(methylsulfanyl)-D-ribulose 1-phosphate. Its pathway is amino-acid biosynthesis; L-methionine biosynthesis via salvage pathway; L-methionine from S-methyl-5-thio-alpha-D-ribose 1-phosphate: step 1/6. Catalyzes the interconversion of methylthioribose-1-phosphate (MTR-1-P) into methylthioribulose-1-phosphate (MTRu-1-P). The polypeptide is Methylthioribose-1-phosphate isomerase (Mri1) (Mus musculus (Mouse)).